A 401-amino-acid polypeptide reads, in one-letter code: Protein IQ-DOMAIN 24 (401 aa).

Positions 1 to 48 (MGFFGRLFGSKKQEKATPNRRRWSFATRSSHPENDSSSHSSKRRGDED) are disordered. Positions 105–121 (EYKAAMKIQSAFRGYLA) are calmodulin-binding. 2 IQ domains span residues 105-133 (EYKAAMKIQSAFRGYLARRALRALKALVK) and 134-156 (LQALVKGHIVRKQTADMLRRMQT). Composition is skewed to low complexity over residues 165–176 (RASRSSHVSDSS) and 278–287 (RSRTGSSSGG). Disordered regions lie at residues 165–186 (RASRSSHVSDSSHPPTLMIPSS) and 258–296 (SPRKRGSLVVPTSVENSPQLRSRTGSSSGGSRRKTPFTP).

This sequence belongs to the IQD family. Binds to multiple calmodulin (CaM) in the presence of Ca(2+) and CaM-like proteins.

It is found in the nucleus. The protein resides in the nuclear body. Its subcellular location is the cell membrane. Its function is as follows. May be involved in cooperative interactions with calmodulins or calmodulin-like proteins. Recruits calmodulin proteins to microtubules, thus being a potential scaffold in cellular signaling and trafficking. May associate with nucleic acids and regulate gene expression at the transcriptional or post-transcriptional level. This is Protein IQ-DOMAIN 24 from Arabidopsis thaliana (Mouse-ear cress).